The chain runs to 494 residues: Guanosine-5'-triphosphate,3'-diphosphate pyrophosphatase (494 aa).

Belongs to the GppA/Ppx family. GppA subfamily.

It catalyses the reaction guanosine 3'-diphosphate 5'-triphosphate + H2O = guanosine 3',5'-bis(diphosphate) + phosphate + H(+). Its pathway is purine metabolism; ppGpp biosynthesis; ppGpp from GTP: step 2/2. Its function is as follows. Catalyzes the conversion of pppGpp to ppGpp. Guanosine pentaphosphate (pppGpp) is a cytoplasmic signaling molecule which together with ppGpp controls the 'stringent response', an adaptive process that allows bacteria to respond to amino acid starvation, resulting in the coordinated regulation of numerous cellular activities. The chain is Guanosine-5'-triphosphate,3'-diphosphate pyrophosphatase from Shigella flexneri serotype 5b (strain 8401).